A 191-amino-acid polypeptide reads, in one-letter code: Protein LURP-one-related 6 (191 aa).

Belongs to the LOR family.

In terms of biological role, might be related to the phospholipid scramblase and tubby-like superfamily of membrane tethered transcription factors. In Arabidopsis thaliana (Mouse-ear cress), this protein is Protein LURP-one-related 6.